Reading from the N-terminus, the 132-residue chain is Ragulator complex protein LAMTOR3 homolog (132 aa).

The protein belongs to the LAMTOR3 family. Part of the Ragulator complex.

In terms of biological role, regulator of the TOR pathway, a signaling cascade that promotes cell growth in response to growth factors, energy levels, and amino acids. May activate the TOR signaling cascade in response to amino acids. The sequence is that of Ragulator complex protein LAMTOR3 homolog from Dictyostelium discoideum (Social amoeba).